Reading from the N-terminus, the 296-residue chain is Chelated iron transport system membrane protein YfeB (296 aa).

One can recognise an ABC transporter domain in the interval 11–246 (LVVDNVTVTY…NLEMTFGGVL (236 aa)). Residue 44 to 51 (GVNGSGKS) coordinates ATP. The disordered stretch occupies residues 276–296 (VFYGHTKNDPPAQSQSKEQNS). Over residues 286 to 296 (PAQSQSKEQNS) the composition is skewed to polar residues.

It belongs to the ABC transporter superfamily.

The protein localises to the cell inner membrane. Its function is as follows. Part of an ATP-driven transport system YfeABCD for chelated iron. The chain is Chelated iron transport system membrane protein YfeB (yfeB) from Yersinia pestis.